We begin with the raw amino-acid sequence, 615 residues long: 1-deoxy-D-xylulose-5-phosphate synthase (615 aa).

Residues His72 and Gly111–Ser113 each bind thiamine diphosphate. Asp142 contacts Mg(2+). Thiamine diphosphate is bound by residues Gly143 to Ala144, Asn171, Tyr278, and Glu360. Residue Asn171 coordinates Mg(2+).

The protein belongs to the transketolase family. DXPS subfamily. In terms of assembly, homodimer. Mg(2+) serves as cofactor. Thiamine diphosphate is required as a cofactor.

The enzyme catalyses D-glyceraldehyde 3-phosphate + pyruvate + H(+) = 1-deoxy-D-xylulose 5-phosphate + CO2. The protein operates within metabolic intermediate biosynthesis; 1-deoxy-D-xylulose 5-phosphate biosynthesis; 1-deoxy-D-xylulose 5-phosphate from D-glyceraldehyde 3-phosphate and pyruvate: step 1/1. In terms of biological role, catalyzes the acyloin condensation reaction between C atoms 2 and 3 of pyruvate and glyceraldehyde 3-phosphate to yield 1-deoxy-D-xylulose-5-phosphate (DXP). The protein is 1-deoxy-D-xylulose-5-phosphate synthase of Campylobacter jejuni subsp. doylei (strain ATCC BAA-1458 / RM4099 / 269.97).